A 176-amino-acid chain; its full sequence is Vitamin K epoxide reductase complex subunit 1-like protein 1 (176 aa).

Topologically, residues 1–13 (MAAPVLLRVSVPR) are cytoplasmic. Residues 14–36 (WERVARYAVCAAGILLSIYAYHV) form a helical membrane-spanning segment. The Lumenal segment spans residues 37–87 (EREKERDPEHRALCDLGPWVKCSAALASRWGRGFGLLGSIFGKDGVLNQPN). The cysteines at positions 50 and 58 are disulfide-linked. Residue asparagine 87 coordinates (S)-warfarin. The helical transmembrane segment at 88–102 (SVFGLIFYILQLLLG) threads the bilayer. The Cytoplasmic portion of the chain corresponds to 103 to 107 (MTASA). The helical transmembrane segment at 108–135 (VAALILMTSSIMSVVGSLYLAYILYFVL) threads the bilayer. Residues 136 to 138 (KEF) are Lumenal-facing. Cysteines 139 and 142 form a disulfide. Residues 139–160 (CIICIVTYVLNFLLLIINYKRL) form a helical membrane-spanning segment. Positions 142 and 146 each coordinate phylloquinone. Tyrosine 146 is a binding site for (S)-warfarin. Over 161–176 (VYLNEAWKRQLQPKQD) the chain is Cytoplasmic.

It belongs to the VKOR family.

The protein resides in the endoplasmic reticulum membrane. It catalyses the reaction phylloquinone + [protein]-disulfide + H2O = 2,3-epoxyphylloquinone + [protein]-dithiol. The enzyme catalyses phylloquinol + [protein]-disulfide = phylloquinone + [protein]-dithiol. Inhibited by warfarin (coumadin). Warfarin locks VKORC1 in both redox states into the closed conformation. Functionally, involved in vitamin K metabolism. Can reduce inactive vitamin K 2,3-epoxide to active vitamin K, and may contribute to vitamin K-mediated protection against oxidative stress. Plays a role in vitamin K-dependent gamma-carboxylation of Glu residues in target proteins. The polypeptide is Vitamin K epoxide reductase complex subunit 1-like protein 1 (VKORC1L1) (Homo sapiens (Human)).